A 289-amino-acid chain; its full sequence is uncharacterized protein (289 aa).

Residues 1-58 enclose the HTH lysR-type domain; that stretch reads MDEKDWILLKILHEEQSVTKTAERLFTSQPSITYRLKKIEEIFGIELFTKRHKGITFT. Positions 18–37 form a DNA-binding region, H-T-H motif; sequence VTKTAERLFTSQPSITYRLK.

The protein belongs to the LysR transcriptional regulatory family.

This is an uncharacterized protein from Bacillus subtilis (strain 168).